The primary structure comprises 202 residues: Imidazoleglycerol-phosphate dehydratase (202 aa).

It belongs to the imidazoleglycerol-phosphate dehydratase family.

The protein resides in the cytoplasm. The catalysed reaction is D-erythro-1-(imidazol-4-yl)glycerol 3-phosphate = 3-(imidazol-4-yl)-2-oxopropyl phosphate + H2O. Its pathway is amino-acid biosynthesis; L-histidine biosynthesis; L-histidine from 5-phospho-alpha-D-ribose 1-diphosphate: step 6/9. The polypeptide is Imidazoleglycerol-phosphate dehydratase (Brucella abortus (strain S19)).